A 158-amino-acid chain; its full sequence is Crossover junction endodeoxyribonuclease RuvC (158 aa).

Catalysis depends on residues Asp7, Glu66, and Asp139. Residues Asp7, Glu66, and Asp139 each contribute to the Mg(2+) site.

The protein belongs to the RuvC family. As to quaternary structure, homodimer which binds Holliday junction (HJ) DNA. The HJ becomes 2-fold symmetrical on binding to RuvC with unstacked arms; it has a different conformation from HJ DNA in complex with RuvA. In the full resolvosome a probable DNA-RuvA(4)-RuvB(12)-RuvC(2) complex forms which resolves the HJ. Requires Mg(2+) as cofactor.

It localises to the cytoplasm. It catalyses the reaction Endonucleolytic cleavage at a junction such as a reciprocal single-stranded crossover between two homologous DNA duplexes (Holliday junction).. In terms of biological role, the RuvA-RuvB-RuvC complex processes Holliday junction (HJ) DNA during genetic recombination and DNA repair. Endonuclease that resolves HJ intermediates. Cleaves cruciform DNA by making single-stranded nicks across the HJ at symmetrical positions within the homologous arms, yielding a 5'-phosphate and a 3'-hydroxyl group; requires a central core of homology in the junction. The consensus cleavage sequence is 5'-(A/T)TT(C/G)-3'. Cleavage occurs on the 3'-side of the TT dinucleotide at the point of strand exchange. HJ branch migration catalyzed by RuvA-RuvB allows RuvC to scan DNA until it finds its consensus sequence, where it cleaves and resolves the cruciform DNA. The polypeptide is Crossover junction endodeoxyribonuclease RuvC (Carboxydothermus hydrogenoformans (strain ATCC BAA-161 / DSM 6008 / Z-2901)).